The following is a 145-amino-acid chain: Ribonuclease H (145 aa).

An RNase H type-1 domain is found at 1–141 (MQEVTIYSDG…ADALANRGVA (141 aa)). Mg(2+) is bound by residues Asp-9, Glu-47, Asp-69, and Asp-133.

Belongs to the RNase H family. Monomer. Requires Mg(2+) as cofactor.

The protein localises to the cytoplasm. The enzyme catalyses Endonucleolytic cleavage to 5'-phosphomonoester.. Functionally, endonuclease that specifically degrades the RNA of RNA-DNA hybrids. The sequence is that of Ribonuclease H from Cupriavidus metallidurans (strain ATCC 43123 / DSM 2839 / NBRC 102507 / CH34) (Ralstonia metallidurans).